We begin with the raw amino-acid sequence, 469 residues long: MEHHQPEDPAPGKAGTVEADIPKNHEVLAGPYEHPQDTDARDADGEAGEREPADQALLPSQCGDNLESPLPEAGSAPPGPTLGTLPEVETIKACSMPQELPQSPRTRQPEPDFYCVKWIPWKGERTPIITQSTNGPCPLLAIMNILFLQWKVKLPPQKEVITSDELMAHLGNCLLSIKPQEKSEGLQLNFQQNVDDAMTVLPKLATGLDVNARFTGVSDFEYTPECSVFDLLGIPLYHGWLVDPQSPEAVRAVGKLSYNQLVERIITCKHSSDTNLVTKGLVAEQFLETTAAQLTYHGLCELTAAAKEGELSVFFRNNHFSTMTKHKSHLYLLVTDQGFLQEEQIVWESLHNVDGDSCFCDSDFHLSHSLGKGPGAEGGSGSPEKQLQVDQDYLIALSLQQQQPRGTLGLTDLELAQQLQQEEYQQQQAAQPVWMRTRALSPQGRGATSGRPAGERRQRPKHESDCILL.

Residues 1–85 (MEHHQPEDPA…APPGPTLGTL (85 aa)) form a disordered region. Positions 34-53 (HPQDTDARDADGEAGEREPA) are enriched in basic and acidic residues. Ser103 carries the phosphoserine modification. Cys137 serves as the catalytic Nucleophile. His319 serves as the catalytic Proton acceptor. The tract at residues 388–426 (QVDQDYLIALSLQQQQPRGTLGLTDLELAQQLQQEEYQQ) is ubiquitin-binding domain (UBD). A disordered region spans residues 428–469 (QAAQPVWMRTRALSPQGRGATSGRPAGERRQRPKHESDCILL). At Ser441 the chain carries Phosphoserine. Over residues 453 to 469 (AGERRQRPKHESDCILL) the composition is skewed to basic and acidic residues.

Belongs to the MINDY deubiquitinase family. FAM63 subfamily.

It catalyses the reaction Thiol-dependent hydrolysis of ester, thioester, amide, peptide and isopeptide bonds formed by the C-terminal Gly of ubiquitin (a 76-residue protein attached to proteins as an intracellular targeting signal).. Hydrolase that can specifically remove 'Lys-48'-linked conjugated ubiquitin from proteins. Has exodeubiquitinase activity and has a preference for long polyubiquitin chains. May play a regulatory role at the level of protein turnover. The protein is Ubiquitin carboxyl-terminal hydrolase MINDY-1 (MINDY1) of Pongo abelii (Sumatran orangutan).